Consider the following 195-residue polypeptide: Auxin-responsive protein IAA14 (195 aa).

2 disordered regions span residues 1-61 and 85-107; these read MAAE…SPAS and STAA…NKGG. An EAR-like (transcriptional repression) motif is present at residues 10–14; it reads LRLGL. In terms of domain architecture, PB1 spans 108–191; that stretch reads GLYVKVSMDG…SCKKLRIMRG (84 aa).

It belongs to the Aux/IAA family. Homodimers and heterodimers. Highly expressed in flowers. Expressed in etiolated seedlings.

It localises to the nucleus. Aux/IAA proteins are short-lived transcriptional factors that function as repressors of early auxin response genes at low auxin concentrations. In Oryza sativa subsp. japonica (Rice), this protein is Auxin-responsive protein IAA14 (IAA14).